A 133-amino-acid chain; its full sequence is ATP synthase epsilon chain, chloroplastic (133 aa).

The protein belongs to the ATPase epsilon chain family. In terms of assembly, F-type ATPases have 2 components, CF(1) - the catalytic core - and CF(0) - the membrane proton channel. CF(1) has five subunits: alpha(3), beta(3), gamma(1), delta(1), epsilon(1). CF(0) has three main subunits: a, b and c.

The protein resides in the plastid. It is found in the chloroplast thylakoid membrane. Its function is as follows. Produces ATP from ADP in the presence of a proton gradient across the membrane. The protein is ATP synthase epsilon chain, chloroplastic of Zygnema circumcarinatum (Green alga).